The following is a 952-amino-acid chain: Probable mixed-linked glucan synthase 6 (952 aa).

The next 2 membrane-spanning stretches (helical) occupy residues 102–122 and 132–152; these read LLHP…LFVI and AMWL…SWLL. The active site involves aspartate 227. Residues 278–308 are a coiled coil; it reads EEFVNDRRRVRKEYDDFKARINGLEHDIKQR. Substrate-binding residues include aspartate 429 and aspartate 431. The active site involves aspartate 636. The next 6 membrane-spanning stretches (helical) occupy residues 718-738, 744-764, 782-802, 834-854, 865-885, and 898-918; these read LFLI…HFIV, MFYV…VLEV, MTAS…KVVF, WLMI…AVAF, WLKV…LYPF, and VVVL…YINI.

This sequence belongs to the glycosyltransferase 2 family. Plant cellulose synthase-like F subfamily.

It is found in the golgi apparatus membrane. Its function is as follows. May catalyze both beta-1,3 and beta-1,4 glycosidic linkage on beta-D-glucan. Essential for (1,3;1,4)-beta-D-glucans synthesis in grasses and cereals (Poaceae). The mixed-linked glucans (which are not present in walls of dicotyledons or most other monocotyledonous plants) are particularly important constituents of the walls of the starchy endosperm and aleurone cells of cereal grains such as oats, wheat, rice and barley. They can account for up to 70% by weight of the wall. The sequence is that of Probable mixed-linked glucan synthase 6 (CSLF6) from Oryza sativa subsp. japonica (Rice).